The chain runs to 721 residues: BBSome complex member bbs-7 (721 aa).

As to quaternary structure, part of BBSome complex, that contains at least bbs-1, bbs-2, bbs-4, bbs-5, osm-12, bbs-8/ttc-8 and bbs-9. Interacts with bbs-1. Expressed in ciliated cells including amphid and both inner and outer labial neurons of the head and in both phasmid neurons PHA and PHB in the tail at larval stages L1 and L2.

It localises to the cell projection. It is found in the cilium. The protein resides in the cytoplasm. Its subcellular location is the cytoskeleton. The protein localises to the cilium basal body. It localises to the cilium axoneme. Functionally, component of the BBSome complex. The BBSome complex is thought to function as a coat complex required for sorting of specific membrane proteins to the primary cilia. The BBSome complex is required for ciliogenesis but is dispensable for centriolar satellite function. Required for proper BBSome complex assembly and its ciliary localization. Required for cilia biogenesis and both the assembly and movement of intraflagellar transport proteins along the ciliary axoneme. Plays a role in the removal of degraded mechanosensory receptors within the cilia. Plays a role in guanylyl cyclase localization in the ring-like structures at the base of the finger compartment in AFD sensory neurons. In ciliated sensory neurons, required for the sensation of nitric oxide and avoidance of NO-producing organisms like P.aeruginosa. In Caenorhabditis elegans, this protein is BBSome complex member bbs-7.